We begin with the raw amino-acid sequence, 82 residues long: ATP synthase subunit c, chloroplastic (82 aa).

2 consecutive transmembrane segments (helical) span residues proline 3–glycine 23 and phenylalanine 57–alanine 77.

This sequence belongs to the ATPase C chain family. In terms of assembly, F-type ATPases have 2 components, F(1) - the catalytic core - and F(0) - the membrane proton channel. F(1) has five subunits: alpha(3), beta(3), gamma(1), delta(1), epsilon(1). F(0) has four main subunits: a(1), b(1), b'(1) and c(10-14). The alpha and beta chains form an alternating ring which encloses part of the gamma chain. F(1) is attached to F(0) by a central stalk formed by the gamma and epsilon chains, while a peripheral stalk is formed by the delta, b and b' chains.

Its subcellular location is the plastid. It localises to the chloroplast thylakoid membrane. F(1)F(0) ATP synthase produces ATP from ADP in the presence of a proton or sodium gradient. F-type ATPases consist of two structural domains, F(1) containing the extramembraneous catalytic core and F(0) containing the membrane proton channel, linked together by a central stalk and a peripheral stalk. During catalysis, ATP synthesis in the catalytic domain of F(1) is coupled via a rotary mechanism of the central stalk subunits to proton translocation. Functionally, key component of the F(0) channel; it plays a direct role in translocation across the membrane. A homomeric c-ring of between 10-14 subunits forms the central stalk rotor element with the F(1) delta and epsilon subunits. This Tetradesmus obliquus (Green alga) protein is ATP synthase subunit c, chloroplastic.